A 152-amino-acid polypeptide reads, in one-letter code: MDTTRPLSWDFQSQLMSNLKILYCLNMLKLSNWYFGGIMKVYGLFGINENAINDFIENHIKTFTIINALNLETVKNLKEGDLVFITSTLREDLRNGTEGILGRVINVSLVPQMINGFEEKEIIAGRVQLEMLGFAKCVKYESIHVEITFRMY.

This is an uncharacterized protein from Methanocaldococcus jannaschii (strain ATCC 43067 / DSM 2661 / JAL-1 / JCM 10045 / NBRC 100440) (Methanococcus jannaschii).